The sequence spans 418 residues: Actin-like protein 7B (418 aa).

The segment at 1 to 42 is disordered; that stretch reads MATKNSPSPKPMGTAQGDPGEAGTLPAPEAAGIRDTGSTQLK. S8 carries the post-translational modification Phosphoserine.

This sequence belongs to the actin family. Testis specific.

Its subcellular location is the cytoplasm. It is found in the cytoskeleton. This chain is Actin-like protein 7B (Actl7b), found in Mus musculus (Mouse).